The following is an 89-amino-acid chain: MSITAERKAEVIQGNANKAGDTGSPEVQVAILSERIANLTAHFKTHTKDNHSRRGLLKLVSTRRSLLDYVKKKDEARYKALLEKHNIRR.

Residues 1–10 (MSITAERKAE) show a composition bias toward basic and acidic residues. Residues 1 to 24 (MSITAERKAEVIQGNANKAGDTGS) are disordered.

The protein belongs to the universal ribosomal protein uS15 family. In terms of assembly, part of the 30S ribosomal subunit. Forms a bridge to the 50S subunit in the 70S ribosome, contacting the 23S rRNA.

In terms of biological role, one of the primary rRNA binding proteins, it binds directly to 16S rRNA where it helps nucleate assembly of the platform of the 30S subunit by binding and bridging several RNA helices of the 16S rRNA. Forms an intersubunit bridge (bridge B4) with the 23S rRNA of the 50S subunit in the ribosome. The chain is Small ribosomal subunit protein uS15 from Rhodopseudomonas palustris (strain HaA2).